The following is a 186-amino-acid chain: MGLSDLSKAPGQALGDMLQLGNIESVIQWGRGNSLWPFPFATACCGIEYMSTACSDYDIARFGAERPSFSPRQADMILVLGTITYKMAPVLRQIYDQMAEPKFVISVGACASSGGMFNTYGVLQGVDRILPVDIYVPGCPPRPEAILDALVKLQTKLKTQGLEARRQEVMQKIQELNERNKPLVVR.

[4Fe-4S] cluster-binding residues include Cys-44, Cys-45, Cys-110, and Cys-139.

It belongs to the complex I 20 kDa subunit family. NDH-1 is composed of 14 different subunits. Subunits NuoB, C, D, E, F, and G constitute the peripheral sector of the complex. [4Fe-4S] cluster is required as a cofactor.

It is found in the cell inner membrane. It carries out the reaction a quinone + NADH + 5 H(+)(in) = a quinol + NAD(+) + 4 H(+)(out). Its function is as follows. NDH-1 shuttles electrons from NADH, via FMN and iron-sulfur (Fe-S) centers, to quinones in the respiratory chain. The immediate electron acceptor for the enzyme in this species is believed to be ubiquinone. Couples the redox reaction to proton translocation (for every two electrons transferred, four hydrogen ions are translocated across the cytoplasmic membrane), and thus conserves the redox energy in a proton gradient. This is NADH-quinone oxidoreductase subunit B from Leptospira borgpetersenii serovar Hardjo-bovis (strain JB197).